The primary structure comprises 89 residues: Small ribosomal subunit protein bS16 (89 aa).

Belongs to the bacterial ribosomal protein bS16 family.

In Desulforamulus reducens (strain ATCC BAA-1160 / DSM 100696 / MI-1) (Desulfotomaculum reducens), this protein is Small ribosomal subunit protein bS16.